Consider the following 240-residue polypeptide: Ribonuclease HII (240 aa).

In terms of domain architecture, RNase H type-2 spans Gly33–Thr222. Residues Asp39, Glu40, and Asp131 each coordinate a divalent metal cation.

It belongs to the RNase HII family. The cofactor is Mn(2+). Mg(2+) serves as cofactor.

It is found in the cytoplasm. The enzyme catalyses Endonucleolytic cleavage to 5'-phosphomonoester.. In terms of biological role, endonuclease that specifically degrades the RNA of RNA-DNA hybrids. This is Ribonuclease HII from Mycobacterium leprae (strain Br4923).